Here is a 399-residue protein sequence, read N- to C-terminus: MTKKRHLFTSESVTEGHPDKICDQISDSILDAILSKDANARVACETTVTTGLVLVAGEITTSTYVDIPKIVRETIQGIGYTRAKYGFDAETCAVLTSIDEQSADIAMGVDQALEAREGQMTDAEIEAIGAGDQGLMFGFACNETQELMPLPISLAHKLARRLTEVRKNDTLSYLRPDGKTQVTVEYDENGKPVRVDTIVISTQHHPDVTWEEIDRDLKEHVIKAVVPAELIDGETKFFINPTGRFVIGGPQGDAGLTGRKIIVDTYGGYARHGGGAFSGKDATKVDRSAAYAARYVAKNIVAAGLAEKAEVQLAYAIGVAQPVSISVDTFGTGKVSEDVLVELVRNNFDLRPAGIIKMLDLRRPIYKQTAAYGHFGRTDVDLSWERTDKAAALKEQAGL.

Residue His-17 participates in ATP binding. Position 19 (Asp-19) interacts with Mg(2+). Glu-45 contributes to the K(+) binding site. Residues Glu-58 and Gln-101 each contribute to the L-methionine site. The segment at 101–111 is flexible loop; the sequence is QSADIAMGVDQ. ATP-binding positions include 177 to 179, 244 to 245, Asp-253, 259 to 260, Ala-276, and Lys-280; these read DGK, RF, and RK. Asp-253 provides a ligand contact to L-methionine. Lys-284 serves as a coordination point for L-methionine.

The protein belongs to the AdoMet synthase family. As to quaternary structure, homotetramer; dimer of dimers. Requires Mg(2+) as cofactor. K(+) serves as cofactor.

It is found in the cytoplasm. The catalysed reaction is L-methionine + ATP + H2O = S-adenosyl-L-methionine + phosphate + diphosphate. The protein operates within amino-acid biosynthesis; S-adenosyl-L-methionine biosynthesis; S-adenosyl-L-methionine from L-methionine: step 1/1. Catalyzes the formation of S-adenosylmethionine (AdoMet) from methionine and ATP. The overall synthetic reaction is composed of two sequential steps, AdoMet formation and the subsequent tripolyphosphate hydrolysis which occurs prior to release of AdoMet from the enzyme. This Bacillus anthracis (strain A0248) protein is S-adenosylmethionine synthase.